The following is a 147-amino-acid chain: Ribonuclease H (147 aa).

Residues 1–142 (MKKVSIYTDG…CDKLATDEIK (142 aa)) enclose the RNase H type-1 domain. Positions 9, 47, 69, and 134 each coordinate Mg(2+).

The protein belongs to the RNase H family. Monomer. Requires Mg(2+) as cofactor.

Its subcellular location is the cytoplasm. The catalysed reaction is Endonucleolytic cleavage to 5'-phosphomonoester.. Endonuclease that specifically degrades the RNA of RNA-DNA hybrids. The sequence is that of Ribonuclease H from Acetivibrio thermocellus (strain ATCC 27405 / DSM 1237 / JCM 9322 / NBRC 103400 / NCIMB 10682 / NRRL B-4536 / VPI 7372) (Clostridium thermocellum).